Consider the following 163-residue polypeptide: Gas vesicle protein H2 (163 aa).

Positions 57 to 92 are disordered; sequence LGSDARSPSTPAGNADDAGDAETAHIETRASDDSDD. Positions 78 to 88 are enriched in basic and acidic residues; the sequence is ETAHIETRASD.

Belongs to the gas vesicle GvpH family. In terms of assembly, gvpF to GvpM interact with each other in vitro, and may form multi-subunit complex(es). Interacts with GvpC. Might interact with GvpA.

The protein localises to the gas vesicle. Its subcellular location is the cytoplasm. In terms of biological role, a minor component of the gas vesicle, also found in soluble extracts. Proteins GvpF to GvpM might be involved in nucleating gas vesicle formation. Gas vesicles are hollow, gas filled proteinaceous nanostructures found in several microbial planktonic microorganisms. They allow positioning of halobacteria at the optimal depth for growth in the poorly aerated, shallow brine pools of their habitat. Its function is as follows. Expression of 2 c-vac DNA fragments containing 2 divergently transcribed regions (gvpE-gvpF-gvpG-gvpH-gvpI-gvpJ-gvpK-gvpL-gvpM and gvpA-gvpC-gvpN-gvpO) allows H.volcanii to produce gas vesicles. The chain is Gas vesicle protein H2 from Halobacterium salinarum (strain ATCC 700922 / JCM 11081 / NRC-1) (Halobacterium halobium).